Here is a 66-residue protein sequence, read N- to C-terminus: Beta-defensin 107A (66 aa).

The N-terminal stretch at 1-22 (MKIFFFIFAALILLAQIFQART) is a signal peptide. Disulfide bonds link Cys37/Cys51 and Cys41/Cys60.

It belongs to the beta-defensin family.

The protein localises to the secreted. Its function is as follows. Has antibacterial activity. This chain is Beta-defensin 107A (DEFB107A), found in Macaca fascicularis (Crab-eating macaque).